A 490-amino-acid chain; its full sequence is Ketol-acid reductoisomerase (NADP(+)) (490 aa).

Residues isoleucine 15 to serine 208 form the KARI N-terminal Rossmann domain. NADP(+)-binding positions include cysteine 45–glutamine 48, arginine 68, serine 78, and aspartate 108–glutamine 110. Histidine 132 is an active-site residue. Residue glycine 158 coordinates NADP(+). KARI C-terminal knotted domains lie at serine 209 to isoleucine 344 and tyrosine 345 to methionine 484. Residues aspartate 217, glutamate 221, glutamate 389, and glutamate 393 each coordinate Mg(2+). Serine 414 lines the substrate pocket.

The protein belongs to the ketol-acid reductoisomerase family. It depends on Mg(2+) as a cofactor.

It carries out the reaction (2R)-2,3-dihydroxy-3-methylbutanoate + NADP(+) = (2S)-2-acetolactate + NADPH + H(+). The catalysed reaction is (2R,3R)-2,3-dihydroxy-3-methylpentanoate + NADP(+) = (S)-2-ethyl-2-hydroxy-3-oxobutanoate + NADPH + H(+). It participates in amino-acid biosynthesis; L-isoleucine biosynthesis; L-isoleucine from 2-oxobutanoate: step 2/4. It functions in the pathway amino-acid biosynthesis; L-valine biosynthesis; L-valine from pyruvate: step 2/4. In terms of biological role, involved in the biosynthesis of branched-chain amino acids (BCAA). Catalyzes an alkyl-migration followed by a ketol-acid reduction of (S)-2-acetolactate (S2AL) to yield (R)-2,3-dihydroxy-isovalerate. In the isomerase reaction, S2AL is rearranged via a Mg-dependent methyl migration to produce 3-hydroxy-3-methyl-2-ketobutyrate (HMKB). In the reductase reaction, this 2-ketoacid undergoes a metal-dependent reduction by NADPH to yield (R)-2,3-dihydroxy-isovalerate. This chain is Ketol-acid reductoisomerase (NADP(+)), found in Buchnera aphidicola subsp. Melaphis rhois.